A 424-amino-acid polypeptide reads, in one-letter code: Enolase (424 aa).

Gln162 contributes to the (2R)-2-phosphoglycerate binding site. Residue Glu204 is the Proton donor of the active site. Mg(2+) contacts are provided by Asp241, Glu284, and Asp311. Residues Lys336, Arg365, Ser366, and Lys387 each coordinate (2R)-2-phosphoglycerate. The active-site Proton acceptor is the Lys336.

The protein belongs to the enolase family. Requires Mg(2+) as cofactor.

Its subcellular location is the cytoplasm. The protein resides in the secreted. It is found in the cell surface. The enzyme catalyses (2R)-2-phosphoglycerate = phosphoenolpyruvate + H2O. The protein operates within carbohydrate degradation; glycolysis; pyruvate from D-glyceraldehyde 3-phosphate: step 4/5. Its function is as follows. Catalyzes the reversible conversion of 2-phosphoglycerate (2-PG) into phosphoenolpyruvate (PEP). It is essential for the degradation of carbohydrates via glycolysis. In Chelativorans sp. (strain BNC1), this protein is Enolase.